Here is a 1306-residue protein sequence, read N- to C-terminus: Synergin gamma (1306 aa).

A coiled-coil region spans residues 113–153 (MQKQFAEEQQKRFEQQQKLLEEERKRRQFEEQKQKLRLLSS). Disordered stretches follow at residues 176-196 (GFSR…KQGP) and 252-285 (SGPA…PAQS). Over residues 258 to 272 (EAEKTSDQTLSKEES) the composition is skewed to basic and acidic residues. The EH domain occupies 293–404 (NESLVPDAYK…TPVSQPTAMP (112 aa)). A DFXDF motif 1 motif is present at residues 455 to 459 (DFQDF). The tract at residues 460–494 (QDASKSGSIDDSFTDFQEMPASSKTSNSQHGNSAP) is disordered. At S471 the chain carries Phosphoserine. K509 bears the N6-acetyllysine mark. The tract at residues 514 to 778 (KGISTDKPSE…ADFHSSKFSS (265 aa)) is interaction with AP1G1. The segment at 559 to 601 (STGTDDGFTDFKTADSVSPLEPPTKDTFPSAFASGAAQQTQTQ) is disordered. S576 bears the Phosphoserine mark. An interaction with AP1G1, AP1G2 and GGA1 region spans residues 661 to 673 (LADDFGEFNLFGE). Residues 685 to 689 (DFADF) carry the DFXDF motif 2 motif. The disordered stretch occupies residues 697-730 (ISSEPKASDKYEALREEVSPSPLSSSTVEGAQHP). The segment covering 702 to 714 (KASDKYEALREEV) has biased composition (basic and acidic residues). S715 bears the Phosphoserine mark. K736 carries the post-translational modification N6-acetyllysine. A phosphoserine mark is found at S744 and S764. A DFXDF motif 3 motif is present at residues 767–771 (DFADF). A phosphoserine mark is found at S804, S844, S847, S901, S911, S927, S974, S998, S1065, S1067, S1079, and S1090. Disordered regions lie at residues 986–1016 (PTVD…ADDF) and 1065–1090 (SLSL…RDRS). Polar residues predominate over residues 993–1005 (ETSCPSPASSVAS). T1092 bears the Phosphothreonine mark.

As to quaternary structure, self-associates. Interacts with GGA1 (via GAE domain). Interacts with GGA2 and GGA3. Interacts with AP1G1 (via GAE domain), a subunit of adapter protein complex AP-1. Interacts with AP1G2 (via GAE domain) a subunit of adapter protein complex AP-1. Component of the aftiphilin/p200/gamma-synergin complex, at least composed of AFTPH/aftiphilin, HEATR5B/p200a and SYNRG/gamma-synergin, which plays a role in the AP1G1/AP-1-mediated trafficking of transferrin from early to recycling endosomes. Within the complex interacts with AFTPH/aftiphilin and HEATR5B/p200a; the interactions are direct. Interacts (via EH domain) with SCAMP1.

It localises to the cytoplasm. The protein resides in the cytosol. Its subcellular location is the golgi apparatus. The protein localises to the trans-Golgi network membrane. It is found in the perinuclear region. It localises to the cytoplasmic vesicle. The protein resides in the clathrin-coated vesicle. In terms of biological role, plays a role in endocytosis and/or membrane trafficking at the trans-Golgi network (TGN). May act by linking the adapter protein complex AP-1 to other proteins. Component of clathrin-coated vesicles. Component of the aftiphilin/p200/gamma-synergin complex, which plays roles in AP1G1/AP-1-mediated protein trafficking including the trafficking of transferrin from early to recycling endosomes, and the membrane trafficking of furin and the lysosomal enzyme cathepsin D between the trans-Golgi network (TGN) and endosomes. This Mus musculus (Mouse) protein is Synergin gamma (Synrg).